Reading from the N-terminus, the 641-residue chain is Transcriptional activator of proteases prtT (641 aa).

Residues 52–81 constitute a DNA-binding region (zn(2)-C6 fungal-type); the sequence is CNTCRKLKTRCDLDPRGHACRRCLSLRIDC.

The protein belongs to the prtT family.

The protein localises to the nucleus. Transcription factor required for protein utilization and degradation. Regulates transcription of major secreted proteases including a serine alkaline protease (alp1) and a metalloprotease (NpI). This is Transcriptional activator of proteases prtT (prtT) from Aspergillus oryzae (strain ATCC 42149 / RIB 40) (Yellow koji mold).